The sequence spans 58 residues: Protein SHMOOSE (58 aa).

A disordered region spans residues 27-58; the sequence is FGATPNKSNNHAHYYNHPNPDFPNSPHPYHPR. The segment covering 35–45 has biased composition (low complexity); the sequence is NNHAHYYNHPN. Positions 46 to 58 are enriched in pro residues; that stretch reads PDFPNSPHPYHPR.

In terms of assembly, interacts with IMMT/mitofilin. In terms of tissue distribution, detected in cerebrospinal fluid (at protein level).

The protein localises to the mitochondrion. It localises to the nucleus. In terms of biological role, increases neural cell metabolic activity and mitochondrial oxygen consumption rate. The protein is Protein SHMOOSE of Homo sapiens (Human).